A 342-amino-acid chain; its full sequence is 29 kDa ribonucleoprotein, chloroplastic (342 aa).

Residues 1 to 65 constitute a chloroplast transit peptide; it reads MSASASSLSA…PAEYPSRFVR (65 aa). In terms of domain architecture, RRM 1 spans 99–177; the sequence is LKLFVGNLSF…RPLRVNAGPP (79 aa). Residues S107 and S204 each carry the phosphoserine modification. Residues 167–255 form a disordered region; the sequence is GRPLRVNAGP…GSGSGSGSGS (89 aa). A linker (Gly-rich) region spans residues 178–256; that stretch reads PPKREESFSR…SGSGSGSGSG (79 aa). 2 stretches are compositionally biased toward gly residues: residues 190 to 237 and 245 to 255; these read RSGG…GYGG and SGSGSGSGSGS. An RRM 2 domain is found at 257–335; sequence NRLYVGNLSW…RQIRVSEAEA (79 aa).

The protein resides in the plastid. It localises to the chloroplast. Its function is as follows. Stabilizes specific chloroplast mRNAs. Required for normal chloroplast development under cold stress conditions by stabilizing transcripts of numerous mRNAs under these conditions. The chain is 29 kDa ribonucleoprotein, chloroplastic from Arabidopsis thaliana (Mouse-ear cress).